A 235-amino-acid polypeptide reads, in one-letter code: Phosphoribosylaminoimidazole-succinocarboxamide synthase (235 aa).

Belongs to the SAICAR synthetase family.

The catalysed reaction is 5-amino-1-(5-phospho-D-ribosyl)imidazole-4-carboxylate + L-aspartate + ATP = (2S)-2-[5-amino-1-(5-phospho-beta-D-ribosyl)imidazole-4-carboxamido]succinate + ADP + phosphate + 2 H(+). Its pathway is purine metabolism; IMP biosynthesis via de novo pathway; 5-amino-1-(5-phospho-D-ribosyl)imidazole-4-carboxamide from 5-amino-1-(5-phospho-D-ribosyl)imidazole-4-carboxylate: step 1/2. This Clostridium perfringens (strain SM101 / Type A) protein is Phosphoribosylaminoimidazole-succinocarboxamide synthase.